A 282-amino-acid polypeptide reads, in one-letter code: High mobility group nucleosome-binding domain-containing protein 5 (282 aa).

A disordered region spans residues 1-282; sequence MPKRKAAGQG…GKKEEPQSIV (282 aa). Thr31 carries the post-translational modification Phosphothreonine. Residues 37-46 are compositionally biased toward basic residues; that stretch reads KRTSSSRKMK. Lys67 is covalently cross-linked (Glycyl lysine isopeptide (Lys-Gly) (interchain with G-Cter in SUMO2)). The residue at position 76 (Tyr76) is a Phosphotyrosine. A compositionally biased stretch (basic and acidic residues) spans 81 to 119; that stretch reads KNGEAKITEAPASEKEIVEVKEENIEDATEKGGEKKEAV. Phosphoserine is present on Ser93. Lys101 is covalently cross-linked (Glycyl lysine isopeptide (Lys-Gly) (interchain with G-Cter in SUMO1); alternate). Residue Lys101 forms a Glycyl lysine isopeptide (Lys-Gly) (interchain with G-Cter in SUMO2); alternate linkage. Lys124 participates in a covalent cross-link: Glycyl lysine isopeptide (Lys-Gly) (interchain with G-Cter in SUMO2). Residues 125-138 show a composition bias toward acidic residues; that stretch reads NEEEDQKEDEEDQN. 2 stretches are compositionally biased toward basic and acidic residues: residues 139–152 and 158–256; these read EEKGEAGKEDKDEK and KEDK…KEDL. Acidic residues predominate over residues 257–270; it reads KEEEEGKEEDEIKE. Residues 271–282 are compositionally biased toward basic and acidic residues; it reads DDGKKEEPQSIV.

Belongs to the HMGN family. As to expression, ubiquitously expressed.

Its subcellular location is the nucleus. Functionally, preferentially binds to euchromatin and modulates cellular transcription by counteracting linker histone-mediated chromatin compaction. This Homo sapiens (Human) protein is High mobility group nucleosome-binding domain-containing protein 5 (HMGN5).